We begin with the raw amino-acid sequence, 380 residues long: Crotonobetainyl-CoA reductase (380 aa).

This sequence belongs to the acyl-CoA dehydrogenase family. As to quaternary structure, homotetramer. Requires FAD as cofactor.

It localises to the cytoplasm. It carries out the reaction 4-(trimethylamino)butanoyl-CoA + oxidized [electron-transfer flavoprotein] + H(+) = crotonobetainyl-CoA + reduced [electron-transfer flavoprotein]. Its pathway is amine and polyamine metabolism; carnitine metabolism. In terms of biological role, catalyzes the reduction of crotonobetainyl-CoA to gamma-butyrobetainyl-CoA. The chain is Crotonobetainyl-CoA reductase from Salmonella agona (strain SL483).